Consider the following 336-residue polypeptide: Protein SphX (336 aa).

Positions 1-27 (MFDLSRLSRGIVPMALLLLGISACTPS) are cleaved as a signal peptide.

It belongs to the PstS family.

May be involved in the system for phosphate transport across the cytoplasmic membrane. The sequence is that of Protein SphX (sphX) from Synechocystis sp. (strain ATCC 27184 / PCC 6803 / Kazusa).